Reading from the N-terminus, the 85-residue chain is MRQGIHPDYHKVIFLDTTTNFKFLSGSTKTSSETMEWEDGNEYPVIRLDVSSDSHPFYTGRQKFAAADGRVERFNKKFGLKSNNN.

It belongs to the bacterial ribosomal protein bL31 family. Type B subfamily. As to quaternary structure, part of the 50S ribosomal subunit.

This Staphylococcus haemolyticus (strain JCSC1435) protein is Large ribosomal subunit protein bL31B.